A 635-amino-acid polypeptide reads, in one-letter code: Threonine--tRNA ligase (635 aa).

In terms of domain architecture, TGS spans 1–61; it reads MINISFPDGS…DNDCRLRILT (61 aa). The segment at 242 to 533 is catalytic; that stretch reads DHRKLGKELD…LIEEYAGRFP (292 aa). Positions 333, 384, and 510 each coordinate Zn(2+).

Belongs to the class-II aminoacyl-tRNA synthetase family. As to quaternary structure, homodimer. The cofactor is Zn(2+).

It is found in the cytoplasm. It catalyses the reaction tRNA(Thr) + L-threonine + ATP = L-threonyl-tRNA(Thr) + AMP + diphosphate + H(+). Its function is as follows. Catalyzes the attachment of threonine to tRNA(Thr) in a two-step reaction: L-threonine is first activated by ATP to form Thr-AMP and then transferred to the acceptor end of tRNA(Thr). Also edits incorrectly charged L-seryl-tRNA(Thr). In Rickettsia bellii (strain RML369-C), this protein is Threonine--tRNA ligase.